Here is a 196-residue protein sequence, read N- to C-terminus: Holliday junction branch migration complex subunit RuvA (196 aa).

The interval 1 to 63 is domain I; the sequence is MIEYIKGEIV…EDAHLLFGFA (63 aa). Residues 64-142 are domain II; it reads EKIERELFLL…PMESMAGNLP (79 aa). A flexible linker region spans residues 142–146; the sequence is PEASV. The segment at 147 to 196 is domain III; the sequence is SNGAVTEEAVAALVMLGFQKAASQKAVSAILKGSPTLAVEQVIKTALRML.

It belongs to the RuvA family. Homotetramer. Forms an RuvA(8)-RuvB(12)-Holliday junction (HJ) complex. HJ DNA is sandwiched between 2 RuvA tetramers; dsDNA enters through RuvA and exits via RuvB. An RuvB hexamer assembles on each DNA strand where it exits the tetramer. Each RuvB hexamer is contacted by two RuvA subunits (via domain III) on 2 adjacent RuvB subunits; this complex drives branch migration. In the full resolvosome a probable DNA-RuvA(4)-RuvB(12)-RuvC(2) complex forms which resolves the HJ.

It localises to the cytoplasm. Its function is as follows. The RuvA-RuvB-RuvC complex processes Holliday junction (HJ) DNA during genetic recombination and DNA repair, while the RuvA-RuvB complex plays an important role in the rescue of blocked DNA replication forks via replication fork reversal (RFR). RuvA specifically binds to HJ cruciform DNA, conferring on it an open structure. The RuvB hexamer acts as an ATP-dependent pump, pulling dsDNA into and through the RuvAB complex. HJ branch migration allows RuvC to scan DNA until it finds its consensus sequence, where it cleaves and resolves the cruciform DNA. This Parabacteroides distasonis (strain ATCC 8503 / DSM 20701 / CIP 104284 / JCM 5825 / NCTC 11152) protein is Holliday junction branch migration complex subunit RuvA.